Consider the following 227-residue polypeptide: D-lyxose/D-mannose isomerase (227 aa).

Residues K90, 103–110, H171, E186, and D193 each bind D-fructose; that span reads HFHWRKRE. Mn(2+) is bound by residues H103, H105, E110, and H171.

The protein belongs to the D-lyxose ketol-isomerase family. As to quaternary structure, homodimer; disulfide-linked. Dimerization is facilitated through a disulfide bond between the two monomers of the dimeric enzyme. Requires Mn(2+) as cofactor.

The catalysed reaction is D-lyxose = D-xylulose. The enzyme catalyses D-mannose = D-fructose. Its function is as follows. Sugar isomerase that catalyzes the reversible isomerization of D-lyxose to D-xylulose, and D-mannose to D-fructose. Shows similar activity toward D-lyxose and D-mannose with a turnover and catalytic efficiency for D-lyxose as a substrate only 1.1- and 1.3-fold higher than those for D-mannose, respectively. Shows weaker activity with L-gulose, D-talose, L-ribose and L-allose. Overexpression enables cell growth on the rare pentose D-lyxose as the sole carbon source. This is D-lyxose/D-mannose isomerase from Escherichia coli O157:H7.